The primary structure comprises 65 residues: Conotoxin Am6.4 (65 aa).

Residues 1 to 33 (STGKRNAGKLTVTDDVEADRDTDPDDKDPSVHN) form a disordered region. The propeptide occupies 1–36 (STGKRNAGKLTVTDDVEADRDTDPDDKDPSVHNSWR). Over residues 14-26 (DDVEADRDTDPDD) the composition is skewed to acidic residues. Cystine bridges form between cysteine 40-cysteine 50, cysteine 45-cysteine 59, and cysteine 49-cysteine 64.

Post-translationally, is not hydroxylated. In terms of tissue distribution, expressed by the venom duct.

It localises to the secreted. In terms of biological role, probable toxin that inhibits ion channels. The polypeptide is Conotoxin Am6.4 (Conus amadis (Amadis cone)).